Reading from the N-terminus, the 311-residue chain is 2-methoxy-6-polyprenyl-1,4-benzoquinol methylase, mitochondrial (311 aa).

A mitochondrion-targeting transit peptide spans 1–29 (MAAGLCPGRALLSRRGGALWALLGTARGR). S-adenosyl-L-methionine is bound by residues Thr100, Asp155, and 183 to 184 (NA).

The protein belongs to the class I-like SAM-binding methyltransferase superfamily. MenG/UbiE family. As to quaternary structure, component of a multi-subunit COQ enzyme complex, composed of at least COQ3, COQ4, COQ5, COQ6, COQ7 and COQ9.

It is found in the mitochondrion inner membrane. The catalysed reaction is a 2-methoxy-6-(all-trans-polyprenyl)benzene-1,4-diol + S-adenosyl-L-methionine = a 5-methoxy-2-methyl-3-(all-trans-polyprenyl)benzene-1,4-diol + S-adenosyl-L-homocysteine + H(+). The protein operates within cofactor biosynthesis; ubiquinone biosynthesis. Functionally, methyltransferase required for the conversion of 2-polyprenyl-6-methoxy-1,4-benzoquinol (DDMQH2) to 2-polyprenyl-3-methyl-6-methoxy-1,4-benzoquinol (DMQH2). The chain is 2-methoxy-6-polyprenyl-1,4-benzoquinol methylase, mitochondrial from Gallus gallus (Chicken).